We begin with the raw amino-acid sequence, 260 residues long: 5'-nucleotidase SurE (260 aa).

A divalent metal cation is bound by residues aspartate 8, aspartate 9, serine 39, and asparagine 91.

Belongs to the SurE nucleotidase family. A divalent metal cation is required as a cofactor.

Its subcellular location is the cytoplasm. The catalysed reaction is a ribonucleoside 5'-phosphate + H2O = a ribonucleoside + phosphate. Nucleotidase that shows phosphatase activity on nucleoside 5'-monophosphates. This chain is 5'-nucleotidase SurE, found in Acidovorax ebreus (strain TPSY) (Diaphorobacter sp. (strain TPSY)).